The primary structure comprises 606 residues: MIHPPAQKQAARRYTHSVKIGNLYVGSDHSIKTQSMTTTPTADVDATVAQICALVEARCEIARVTVQGIKEAQACEHIKERLIALGIDVPLVADIHFFPQAAMHVADFVDKVRINPGNFVDKRNMFTGKIYTDKHYADSLLRLEEKFSPLVEKCKRLGKAMRIGVNHGSLSERVMQRYGDTIEGMVVSALEYIEVCEKLGYRDVVFSMKSSNPKVMVAAYRQLAKDLDARGWHYPLHLGVTEAGMGMDGIIKSSVGIGTLLTEGLGDTIRCSLTGCPTQEIPVCESLLKHTTTYLNLPRKNNPFALENSESFVNASKKITKTTPWGSVYGVFIKLNEDHMLNTPVEQLLEQLGIHPENGKKDFTTPDGVVVPKSFIGTSVLKKLEQHFIVFHHHEVPCLYDYNHEIWNQEEVLSSPFVHFHASPPFIHSTRDFFEKKQGEQQPVKLVFSKDLDDECEAAVAIATEFGALLLDGLGEAVILDLPNIPLSTVREIAFGTLQSAGVRLVKTEYISCPGCGRTLFDLPEVTKRIHERTQHLVGLKIAVMGCIVNGPGEMADADFGFVGSKTGMVDLYVKHTCVKAHIPMEQAEDELVLLLKEHGVWKDPE.

[4Fe-4S] cluster contacts are provided by Cys513, Cys516, Cys547, and Glu554.

It belongs to the IspG family. The cofactor is [4Fe-4S] cluster.

It catalyses the reaction (2E)-4-hydroxy-3-methylbut-2-enyl diphosphate + oxidized [flavodoxin] + H2O + 2 H(+) = 2-C-methyl-D-erythritol 2,4-cyclic diphosphate + reduced [flavodoxin]. It participates in isoprenoid biosynthesis; isopentenyl diphosphate biosynthesis via DXP pathway; isopentenyl diphosphate from 1-deoxy-D-xylulose 5-phosphate: step 5/6. Converts 2C-methyl-D-erythritol 2,4-cyclodiphosphate (ME-2,4cPP) into 1-hydroxy-2-methyl-2-(E)-butenyl 4-diphosphate. This is 4-hydroxy-3-methylbut-2-en-1-yl diphosphate synthase (flavodoxin) from Chlamydia abortus (strain DSM 27085 / S26/3) (Chlamydophila abortus).